Here is a 248-residue protein sequence, read N- to C-terminus: MAPARKFFVGGNWKMNGRKNNLGELINTLNAAKLPADTEVVCAPPTAYIDFARQKLDPKIAVAAQNCYKVANGAFTGEIGPGMIKDLGATWVVLGHSERRHVFGESDELIGQKVAHALAEGLGVIACIGEKLDEREAGITEKVVFEQTKVIADNVKDWNKVVLAYEPVWAIGTGKTATPQQAQEVHEKLRGWLKTHVPEAVAHSTRIIYGGSVTGATCKELASQPDVDGFRVSGASLKPEFVDIINAK.

2 residues coordinate substrate: Asn-12 and Lys-14. The residue at position 14 (Lys-14) is an N6-acetyllysine. The residue at position 68 (Tyr-68) is a 3'-nitrotyrosine. His-96 functions as the Electrophile in the catalytic mechanism. At Ser-106 the chain carries Phosphoserine. Lys-142 participates in a covalent cross-link: Glycyl lysine isopeptide (Lys-Gly) (interchain with G-Cter in SUMO1). Position 149 is an N6-succinyllysine (Lys-149). Lys-156 is modified (N6-acetyllysine; alternate). Lys-156 bears the N6-succinyllysine; alternate mark. Glu-166 acts as the Proton acceptor in catalysis. Thr-173 bears the Phosphothreonine mark. The residue at position 194 (Lys-194) is an N6-acetyllysine; alternate. At Lys-194 the chain carries N6-succinyllysine; alternate. Residue Lys-194 is modified to N6-methyllysine; alternate. Tyr-209 carries the 3'-nitrotyrosine modification. The residue at position 212 (Ser-212) is a Phosphoserine. Thr-214 is modified (phosphothreonine). The residue at position 223 (Ser-223) is a Phosphoserine. Lys-238 carries the post-translational modification N6-acetyllysine.

The protein belongs to the triosephosphate isomerase family. Homodimer.

Its subcellular location is the cytoplasm. The enzyme catalyses dihydroxyacetone phosphate = methylglyoxal + phosphate. It catalyses the reaction D-glyceraldehyde 3-phosphate = dihydroxyacetone phosphate. The protein operates within carbohydrate degradation; glycolysis; D-glyceraldehyde 3-phosphate from glycerone phosphate: step 1/1. It participates in carbohydrate biosynthesis; gluconeogenesis. In terms of biological role, triosephosphate isomerase is an extremely efficient metabolic enzyme that catalyzes the interconversion between dihydroxyacetone phosphate (DHAP) and D-glyceraldehyde-3-phosphate (G3P) in glycolysis and gluconeogenesis. Its function is as follows. It is also responsible for the non-negligible production of methylglyoxal a reactive cytotoxic side-product that modifies and can alter proteins, DNA and lipids. The polypeptide is Triosephosphate isomerase (TPI1) (Sus scrofa (Pig)).